The sequence spans 469 residues: Glutamate--tRNA ligase (469 aa).

The short motif at 11-21 (PSPTGFIHLGN) is the 'HIGH' region element. Basic and acidic residues predominate over residues 118-131 (GEKPRYDGTWRPEP). Residues 118–138 (GEKPRYDGTWRPEPGKVLPEP) are disordered. Positions 243–247 (KMSKR) match the 'KMSKS' region motif. Residue lysine 246 coordinates ATP.

This sequence belongs to the class-I aminoacyl-tRNA synthetase family. Glutamate--tRNA ligase type 1 subfamily. In terms of assembly, monomer.

The protein resides in the cytoplasm. The enzyme catalyses tRNA(Glu) + L-glutamate + ATP = L-glutamyl-tRNA(Glu) + AMP + diphosphate. Catalyzes the attachment of glutamate to tRNA(Glu) in a two-step reaction: glutamate is first activated by ATP to form Glu-AMP and then transferred to the acceptor end of tRNA(Glu). This is Glutamate--tRNA ligase from Burkholderia vietnamiensis (strain G4 / LMG 22486) (Burkholderia cepacia (strain R1808)).